The primary structure comprises 114 residues: MSKVLIVAKGMGLKSTPSKLNLVADLIRGKDVSVAMMYLKFCRKKSAGYISKVLKSAVANAQANYNIDLDNLYVKEVLVGKSFSLRRIHARARGKACRVYKHYGNVIIKLFERI.

The protein belongs to the universal ribosomal protein uL22 family. In terms of assembly, part of the 50S ribosomal subunit.

Functionally, this protein binds specifically to 23S rRNA; its binding is stimulated by other ribosomal proteins, e.g. L4, L17, and L20. It is important during the early stages of 50S assembly. It makes multiple contacts with different domains of the 23S rRNA in the assembled 50S subunit and ribosome. Its function is as follows. The globular domain of the protein is located near the polypeptide exit tunnel on the outside of the subunit, while an extended beta-hairpin is found that lines the wall of the exit tunnel in the center of the 70S ribosome. The protein is Large ribosomal subunit protein uL22 of Ehrlichia chaffeensis (strain ATCC CRL-10679 / Arkansas).